The chain runs to 189 residues: GTP cyclohydrolase 1 (189 aa).

Zn(2+) is bound by residues Cys78, His81, and Cys150.

This sequence belongs to the GTP cyclohydrolase I family. Homomer.

The catalysed reaction is GTP + H2O = 7,8-dihydroneopterin 3'-triphosphate + formate + H(+). It participates in cofactor biosynthesis; 7,8-dihydroneopterin triphosphate biosynthesis; 7,8-dihydroneopterin triphosphate from GTP: step 1/1. This chain is GTP cyclohydrolase 1, found in Bacillus cytotoxicus (strain DSM 22905 / CIP 110041 / 391-98 / NVH 391-98).